The primary structure comprises 732 residues: Phosphoribosylformylglycinamidine synthase subunit PurL (732 aa).

Residue histidine 42 is part of the active site. Positions 45 and 84 each coordinate ATP. Glutamate 86 contributes to the Mg(2+) binding site. Residues serine 87–histidine 90 and arginine 109 each bind substrate. The active-site Proton acceptor is the histidine 88. Aspartate 110 is a Mg(2+) binding site. Glutamine 238 is a binding site for substrate. Mg(2+) is bound at residue aspartate 266. Substrate is bound at residue glutamate 310–glutamine 312. Positions 496 and 533 each coordinate ATP. Asparagine 534 is a Mg(2+) binding site. A substrate-binding site is contributed by serine 536.

The protein belongs to the FGAMS family. In terms of assembly, monomer. Part of the FGAM synthase complex composed of 1 PurL, 1 PurQ and 2 PurS subunits.

The protein localises to the cytoplasm. It catalyses the reaction N(2)-formyl-N(1)-(5-phospho-beta-D-ribosyl)glycinamide + L-glutamine + ATP + H2O = 2-formamido-N(1)-(5-O-phospho-beta-D-ribosyl)acetamidine + L-glutamate + ADP + phosphate + H(+). Its pathway is purine metabolism; IMP biosynthesis via de novo pathway; 5-amino-1-(5-phospho-D-ribosyl)imidazole from N(2)-formyl-N(1)-(5-phospho-D-ribosyl)glycinamide: step 1/2. In terms of biological role, part of the phosphoribosylformylglycinamidine synthase complex involved in the purines biosynthetic pathway. Catalyzes the ATP-dependent conversion of formylglycinamide ribonucleotide (FGAR) and glutamine to yield formylglycinamidine ribonucleotide (FGAM) and glutamate. The FGAM synthase complex is composed of three subunits. PurQ produces an ammonia molecule by converting glutamine to glutamate. PurL transfers the ammonia molecule to FGAR to form FGAM in an ATP-dependent manner. PurS interacts with PurQ and PurL and is thought to assist in the transfer of the ammonia molecule from PurQ to PurL. This chain is Phosphoribosylformylglycinamidine synthase subunit PurL, found in Campylobacter hominis (strain ATCC BAA-381 / DSM 21671 / CCUG 45161 / LMG 19568 / NCTC 13146 / CH001A).